The chain runs to 344 residues: Protein L-Myc-1-B (344 aa).

2 stretches are compositionally biased toward polar residues: residues 104–113 (GSPRVTNTQK) and 213–223 (NTMSPQHNFHS). Disordered regions lie at residues 104–162 (GSPR…EDEI) and 208–271 (LPPE…YLER). Residues 259–270 (DLAKRKNHNYLE) show a composition bias toward basic and acidic residues. Residues 261–313 (AKRKNHNYLERKRRNDLRSRFLALREEVPSLSRSTKTPKVVVLSKATEFLKGL) enclose the bHLH domain. The segment at 313–341 (LVIQEQQLTAEKLKLWSRHQQLLRRISQL) is leucine-zipper.

Efficient DNA binding requires dimerization with another bHLH protein. Binds DNA as a heterodimer with MAX. As to expression, high levels in oocytes, modest levels in kidney and low levels in spleen.

It is found in the nucleus. The polypeptide is Protein L-Myc-1-B (mycl1-b) (Xenopus laevis (African clawed frog)).